A 258-amino-acid chain; its full sequence is Aspartate/glutamate leucyltransferase (258 aa).

Belongs to the R-transferase family. Bpt subfamily.

It localises to the cytoplasm. It catalyses the reaction N-terminal L-glutamyl-[protein] + L-leucyl-tRNA(Leu) = N-terminal L-leucyl-L-glutamyl-[protein] + tRNA(Leu) + H(+). The catalysed reaction is N-terminal L-aspartyl-[protein] + L-leucyl-tRNA(Leu) = N-terminal L-leucyl-L-aspartyl-[protein] + tRNA(Leu) + H(+). Functions in the N-end rule pathway of protein degradation where it conjugates Leu from its aminoacyl-tRNA to the N-termini of proteins containing an N-terminal aspartate or glutamate. The protein is Aspartate/glutamate leucyltransferase of Rhizobium etli (strain ATCC 51251 / DSM 11541 / JCM 21823 / NBRC 15573 / CFN 42).